Here is a 947-residue protein sequence, read N- to C-terminus: Bifunctional glutamine synthetase adenylyltransferase/adenylyl-removing enzyme (947 aa).

The tract at residues 1–440 (MTPLSSPLRQ…VFNELIGDDE (440 aa)) is adenylyl removase. The segment at 450-947 (SEPWREVWQD…ASWRKWLVAV (498 aa)) is adenylyl transferase.

This sequence belongs to the GlnE family. Mg(2+) is required as a cofactor.

The catalysed reaction is [glutamine synthetase]-O(4)-(5'-adenylyl)-L-tyrosine + phosphate = [glutamine synthetase]-L-tyrosine + ADP. It carries out the reaction [glutamine synthetase]-L-tyrosine + ATP = [glutamine synthetase]-O(4)-(5'-adenylyl)-L-tyrosine + diphosphate. Functionally, involved in the regulation of glutamine synthetase GlnA, a key enzyme in the process to assimilate ammonia. When cellular nitrogen levels are high, the C-terminal adenylyl transferase (AT) inactivates GlnA by covalent transfer of an adenylyl group from ATP to specific tyrosine residue of GlnA, thus reducing its activity. Conversely, when nitrogen levels are low, the N-terminal adenylyl removase (AR) activates GlnA by removing the adenylyl group by phosphorolysis, increasing its activity. The regulatory region of GlnE binds the signal transduction protein PII (GlnB) which indicates the nitrogen status of the cell. The protein is Bifunctional glutamine synthetase adenylyltransferase/adenylyl-removing enzyme of Salmonella arizonae (strain ATCC BAA-731 / CDC346-86 / RSK2980).